The following is a 335-amino-acid chain: Trans-3-hydroxy-L-proline dehydratase (335 aa).

Cys91 (proton acceptor) is an active-site residue. Substrate is bound by residues 92-93, His222, and 256-257; these read GH and GS.

The protein belongs to the proline racemase family. As to quaternary structure, homodimer.

The catalysed reaction is trans-3-hydroxy-L-proline = 1-pyrroline-2-carboxylate + H2O. Catalyzes the dehydration of trans-3-hydroxy-L-proline (t3LHyp) to Delta(1)-pyrroline-2-carboxylate (Pyr2C). Does not possess neither proline racemase nor 4-hydroxyproline 2-epimerase activities. The protein is Trans-3-hydroxy-L-proline dehydratase of Burkholderia cenocepacia (strain HI2424).